The sequence spans 436 residues: Citrate synthase (436 aa).

Active-site residues include histidine 313 and aspartate 371.

This sequence belongs to the citrate synthase family. In terms of assembly, homohexamer.

The enzyme catalyses oxaloacetate + acetyl-CoA + H2O = citrate + CoA + H(+). It participates in carbohydrate metabolism; tricarboxylic acid cycle; isocitrate from oxaloacetate: step 1/2. This Acetobacter aceti protein is Citrate synthase (aarA).